The following is a 328-amino-acid chain: Flotillin-like protein FloA (328 aa).

The next 2 membrane-spanning stretches (helical) occupy residues 9–29 (LLITGGGLIALAVFFTFVPVG) and 30–50 (LWISSFAAGVHVSIFTLIGMR).

This sequence belongs to the flotillin-like FloA family. As to quaternary structure, homooligomerizes.

It is found in the cell membrane. The protein resides in the membrane raft. In terms of biological role, found in functional membrane microdomains (FMM) that may be equivalent to eukaryotic membrane rafts. FMMs are highly dynamic and increase in number as cells age. Flotillins are thought to be important factors in membrane fluidity. The chain is Flotillin-like protein FloA from Exiguobacterium sp. (strain ATCC BAA-1283 / AT1b).